The primary structure comprises 1145 residues: Structure-specific endonuclease subunit SLX4 (1145 aa).

The segment at 48–108 is disordered; it reads ADIPVQPDPP…GKSKQQPSIS (61 aa). A coiled-coil region spans residues 321–372; the sequence is ERETQKCRQLRQQHELVYAELERYYGDPQKLEEEVMQELDELEKLVADNMIE. Over residues 382–393 the composition is skewed to low complexity; that stretch reads EAESSSTGSSPS. Disordered stretches follow at residues 382-442, 613-634, and 666-689; these read EAES…EDEP, QSSH…SSFS, and SAEK…DLTQ. Residues 395 to 410 are compositionally biased toward basic and acidic residues; it reads EPPDKRPKMTMEDKEN. Polar residues-rich tracts occupy residues 411-430, 613-633, and 678-689; these read LQPT…TRCT, QSSH…SSSF, and YKQSDASVDLTQ.

Belongs to the SLX4 family. In terms of assembly, forms a heterodimer with SLX1. Interacts with mei-9; catalytic subunit of the MEI-9-ERCC1 endonuclease.

It is found in the nucleus. Its function is as follows. Regulatory subunit that interacts with and increases the activity of different structure-specific endonucleases. Has several distinct roles in protecting genome stability by resolving diverse forms of deleterious DNA structures originating from replication and recombination intermediates and from DNA damage. Component of the SLX1-SLX4 structure-specific endonuclease that resolves DNA secondary structures generated during DNA repair and recombination. Has endonuclease activity towards branched DNA substrates, introducing single-strand cuts in duplex DNA close to junctions with ss-DNA. Interacts with the structure-specific MEI-9-ERCC1 endonuclease to generate meiotic crossovers. The polypeptide is Structure-specific endonuclease subunit SLX4 (mus312) (Drosophila melanogaster (Fruit fly)).